A 240-amino-acid polypeptide reads, in one-letter code: 2,3,4,5-tetrahydropyridine-2,6-dicarboxylate N-acetyltransferase (240 aa).

It belongs to the transferase hexapeptide repeat family. DapH subfamily.

It catalyses the reaction (S)-2,3,4,5-tetrahydrodipicolinate + acetyl-CoA + H2O = L-2-acetamido-6-oxoheptanedioate + CoA. Its pathway is amino-acid biosynthesis; L-lysine biosynthesis via DAP pathway; LL-2,6-diaminopimelate from (S)-tetrahydrodipicolinate (acetylase route): step 1/3. Its function is as follows. Catalyzes the transfer of an acetyl group from acetyl-CoA to tetrahydrodipicolinate. The polypeptide is 2,3,4,5-tetrahydropyridine-2,6-dicarboxylate N-acetyltransferase (Bacillus mycoides (strain KBAB4) (Bacillus weihenstephanensis)).